The primary structure comprises 430 residues: Asparagine--tRNA ligase (430 aa).

Belongs to the class-II aminoacyl-tRNA synthetase family.

The protein localises to the cytoplasm. The catalysed reaction is tRNA(Asn) + L-asparagine + ATP = L-asparaginyl-tRNA(Asn) + AMP + diphosphate + H(+). The chain is Asparagine--tRNA ligase from Thermococcus gammatolerans (strain DSM 15229 / JCM 11827 / EJ3).